The primary structure comprises 73 residues: UPF0435 protein OB1527 (73 aa).

The protein belongs to the UPF0435 family.

The polypeptide is UPF0435 protein OB1527 (Oceanobacillus iheyensis (strain DSM 14371 / CIP 107618 / JCM 11309 / KCTC 3954 / HTE831)).